The following is a 322-amino-acid chain: HPr kinase/phosphorylase (322 aa).

Catalysis depends on residues His-146 and Lys-167. Position 161 to 168 (161 to 168 (GDSGLGKS)) interacts with ATP. Residue Ser-168 participates in Mg(2+) binding. Asp-185 functions as the Proton acceptor; for phosphorylation activity. Proton donor; for dephosphorylation activity in the catalytic mechanism. Residues 209–218 (LEVRGLGLLD) form an important for the catalytic mechanism of both phosphorylation and dephosphorylation region. Mg(2+) is bound at residue Glu-210. Arg-250 is an active-site residue. The interval 271-276 (QVAAGR) is important for the catalytic mechanism of dephosphorylation.

The protein belongs to the HPrK/P family. As to quaternary structure, homohexamer. The cofactor is Mg(2+).

It catalyses the reaction [HPr protein]-L-serine + ATP = [HPr protein]-O-phospho-L-serine + ADP + H(+). The catalysed reaction is [HPr protein]-O-phospho-L-serine + phosphate + H(+) = [HPr protein]-L-serine + diphosphate. Functionally, catalyzes the ATP- as well as the pyrophosphate-dependent phosphorylation of a specific serine residue in HPr, a phosphocarrier protein of the phosphoenolpyruvate-dependent sugar phosphotransferase system (PTS). HprK/P also catalyzes the pyrophosphate-producing, inorganic phosphate-dependent dephosphorylation (phosphorolysis) of seryl-phosphorylated HPr (P-Ser-HPr). In Burkholderia lata (strain ATCC 17760 / DSM 23089 / LMG 22485 / NCIMB 9086 / R18194 / 383), this protein is HPr kinase/phosphorylase.